Here is an 816-residue protein sequence, read N- to C-terminus: Ribonucleoside-diphosphate reductase large subunit (816 aa).

The region spanning 1–92 (MYVVKRDGRQ…VSNLHKNTKK (92 aa)) is the ATP-cone domain. ATP-binding positions include 5 to 6 (KR), 11 to 17 (ETVHFDK), T53, and D57. The GDP site is built by S202 and S217. C218 and C444 form a disulfide bridge. Residues 226-228 (DSI), K243, R256, and 263-264 (RG) contribute to the dTTP site. Residue N427 coordinates GDP. The active-site Proton acceptor is N427. Residue C429 is the Cysteine radical intermediate of the active site. GDP contacts are provided by residues E431 and 623-626 (TAST). E431 (proton acceptor) is an active-site residue.

The protein belongs to the ribonucleoside diphosphate reductase large chain family. In terms of assembly, heterotetramer of two large/R1 and two small/R2 subunits. A radical transfer pathway may occur between 'Tyr-125' of protein R2 and R1. Contains a disulfide bonds. Binding of the substrate occurs primarily when the active-site cysteines are reduced. In terms of tissue distribution, highly expressed in actively growing tissues such as young leaves, shoot apices, inflorescences and carpels. Very low expression in cotyledons, adult and cauline leaves and senescent leaves.

It localises to the cytoplasm. The catalysed reaction is a 2'-deoxyribonucleoside 5'-diphosphate + [thioredoxin]-disulfide + H2O = a ribonucleoside 5'-diphosphate + [thioredoxin]-dithiol. With respect to regulation, under complex allosteric control mediated by deoxynucleoside triphosphates and ATP binding to separate specificity and activation sites on the large subunit. The type of nucleotide bound at the specificity site determines substrate preference. It seems probable that ATP makes the enzyme reduce CDP and UDP, dGTP favors ADP reduction and dTTP favors GDP reduction. Stimulated by ATP and inhibited by dATP binding to the activity site. Its function is as follows. Provides the precursors necessary for DNA synthesis. Catalyzes the biosynthesis of deoxyribonucleotides from the corresponding ribonucleotides. R1 contains the binding sites for both substrates and allosteric effectors and carries out the actual reduction of the ribonucleotide. Ribonucleotide reductase (RNR) complex function is essential for efficient organellar DNA degradation in pollen. Involved in chloroplast division. The chain is Ribonucleoside-diphosphate reductase large subunit from Arabidopsis thaliana (Mouse-ear cress).